The following is a 127-amino-acid chain: Turripeptide OL172 (127 aa).

Residues 1-20 form the signal peptide; it reads MFSTLIFLTAVTLLMMPSQT. The propeptide occupies 42–43; sequence QR. Pyrrolidone carboxylic acid is present on Gln44. Positions 73-75 are excised as a propeptide; it reads QRK. Pyrrolidone carboxylic acid is present on Gln76. Residues 104 to 106 constitute a propeptide that is removed on maturation; the sequence is QRK. Gln107 bears the Pyrrolidone carboxylic acid mark.

Post-translationally, the turripeptide OL172 conotoxin-like contains 2 disulfide bonds. As to expression, expressed by the venom duct.

The protein resides in the secreted. Acts as a neurotoxin by inhibiting an ion channel. This is Turripeptide OL172 from Iotyrris olangoensis (Sea snail).